We begin with the raw amino-acid sequence, 628 residues long: Biosynthetic arginine decarboxylase (628 aa).

Lys99 carries the N6-(pyridoxal phosphate)lysine modification. 279–289 (VDVGGGLGIDY) contributes to the substrate binding site.

This sequence belongs to the Orn/Lys/Arg decarboxylase class-II family. SpeA subfamily. Mg(2+) is required as a cofactor. The cofactor is pyridoxal 5'-phosphate.

The enzyme catalyses L-arginine + H(+) = agmatine + CO2. Functionally, catalyzes the biosynthesis of agmatine from arginine. The protein is Biosynthetic arginine decarboxylase of Xanthomonas campestris pv. campestris (strain ATCC 33913 / DSM 3586 / NCPPB 528 / LMG 568 / P 25).